Consider the following 911-residue polypeptide: Protein translocase subunit SecA (911 aa).

Residues Gln-87, Gly-105–Thr-109, and Asp-499 each bind ATP. The Zn(2+) site is built by Cys-895, Cys-897, Cys-906, and His-907.

This sequence belongs to the SecA family. In terms of assembly, monomer and homodimer. Part of the essential Sec protein translocation apparatus which comprises SecA, SecYEG and auxiliary proteins SecDF-YajC and YidC. Zn(2+) serves as cofactor.

The protein resides in the cell inner membrane. It is found in the cytoplasm. It catalyses the reaction ATP + H2O + cellular proteinSide 1 = ADP + phosphate + cellular proteinSide 2.. Its function is as follows. Part of the Sec protein translocase complex. Interacts with the SecYEG preprotein conducting channel. Has a central role in coupling the hydrolysis of ATP to the transfer of proteins into and across the cell membrane, serving both as a receptor for the preprotein-SecB complex and as an ATP-driven molecular motor driving the stepwise translocation of polypeptide chains across the membrane. In Novosphingobium aromaticivorans (strain ATCC 700278 / DSM 12444 / CCUG 56034 / CIP 105152 / NBRC 16084 / F199), this protein is Protein translocase subunit SecA.